Here is a 445-residue protein sequence, read N- to C-terminus: Tubulin beta-7 chain (445 aa).

Gln11, Glu69, Ser138, Gly142, Thr143, Gly144, Asn204, and Asn226 together coordinate GTP. Glu69 is a binding site for Mg(2+). The tract at residues 421-445 (EYQQYQDATAEDEEYEEEEEEEEET) is disordered. Acidic residues predominate over residues 429-445 (TAEDEEYEEEEEEEEET).

It belongs to the tubulin family. In terms of assembly, dimer of alpha and beta chains. A typical microtubule is a hollow water-filled tube with an outer diameter of 25 nm and an inner diameter of 15 nM. Alpha-beta heterodimers associate head-to-tail to form protofilaments running lengthwise along the microtubule wall with the beta-tubulin subunit facing the microtubule plus end conferring a structural polarity. Microtubules usually have 13 protofilaments but different protofilament numbers can be found in some organisms and specialized cells. Mg(2+) is required as a cofactor.

It localises to the cytoplasm. The protein localises to the cytoskeleton. Tubulin is the major constituent of microtubules, a cylinder consisting of laterally associated linear protofilaments composed of alpha- and beta-tubulin heterodimers. Microtubules grow by the addition of GTP-tubulin dimers to the microtubule end, where a stabilizing cap forms. Below the cap, tubulin dimers are in GDP-bound state, owing to GTPase activity of alpha-tubulin. The sequence is that of Tubulin beta-7 chain (TUBB7) from Zea mays (Maize).